The following is a 393-amino-acid chain: Phospholipase A1-II 1 (393 aa).

The stretch at 200-220 (QVLNEIKRLQDMYEHEETSIT) forms a coiled coil. The Acyl-ester intermediate role is filled by Ser-225. Catalysis depends on charge relay system residues Ser-225, Asp-284, and His-321.

Belongs to the AB hydrolase superfamily. Lipase family.

The protein localises to the cytoplasm. Functionally, acylhydrolase that catalyzes the hydrolysis of phospholipids at the sn-1 position. This chain is Phospholipase A1-II 1, found in Oryza sativa subsp. indica (Rice).